The primary structure comprises 241 residues: tRNA (guanine-N(7)-)-methyltransferase (241 aa).

S-adenosyl-L-methionine contacts are provided by glycine 61, glutamate 84, arginine 86, asparagine 117, alanine 118, and leucine 137. Aspartate 140 is an active-site residue. The tract at residues 141-149 is alphaC helix; that stretch reads PHFKKTKHK. Threonine 215 and glutamate 217 together coordinate S-adenosyl-L-methionine. The segment at 215–223 is alpha6 helix; that stretch reads TEEGKKVQR.

It belongs to the class I-like SAM-binding methyltransferase superfamily. TrmB family. Catalytic component of the METTL1-WDR4 complex, composed of mettl1 and wdr4.

It is found in the nucleus. It carries out the reaction guanosine(46) in tRNA + S-adenosyl-L-methionine = N(7)-methylguanosine(46) in tRNA + S-adenosyl-L-homocysteine. The enzyme catalyses a guanosine in mRNA + S-adenosyl-L-methionine = an N(7)-methylguanosine in mRNA + S-adenosyl-L-homocysteine. It catalyses the reaction a guanosine in miRNA + S-adenosyl-L-methionine = an N(7)-methylguanosine in miRNA + S-adenosyl-L-homocysteine. The protein operates within tRNA modification; N(7)-methylguanine-tRNA biosynthesis. In terms of biological role, catalytic component of METTL1-WDR4 methyltransferase complex that mediates the formation of N(7)-methylguanine in a subset of RNA species, such as tRNAs, mRNAs and microRNAs (miRNAs). Catalyzes the formation of N(7)-methylguanine at position 46 (m7G46) in a large subset of tRNAs that contain the 5'-RAGGU-3' motif within the variable loop. M7G46 interacts with C13-G22 in the D-loop to stabilize tRNA tertiary structure and protect tRNAs from decay. Also acts as a methyltransferase for a subset of internal N(7)-methylguanine in mRNAs. Internal N(7)-methylguanine methylation of mRNAs in response to stress promotes their relocalization to stress granules, thereby suppressing their translation. Also methylates a specific subset of miRNAs. The chain is tRNA (guanine-N(7)-)-methyltransferase (mettl1) from Danio rerio (Zebrafish).